Consider the following 314-residue polypeptide: Porphobilinogen deaminase (314 aa).

At Cys-242 the chain carries S-(dipyrrolylmethanemethyl)cysteine.

Belongs to the HMBS family. In terms of assembly, monomer. The cofactor is dipyrromethane.

It catalyses the reaction 4 porphobilinogen + H2O = hydroxymethylbilane + 4 NH4(+). Its pathway is porphyrin-containing compound metabolism; protoporphyrin-IX biosynthesis; coproporphyrinogen-III from 5-aminolevulinate: step 2/4. Functionally, tetrapolymerization of the monopyrrole PBG into the hydroxymethylbilane pre-uroporphyrinogen in several discrete steps. This Buchnera aphidicola subsp. Acyrthosiphon pisum (strain APS) (Acyrthosiphon pisum symbiotic bacterium) protein is Porphobilinogen deaminase (hemC).